We begin with the raw amino-acid sequence, 64 residues long: Lectin-A (64 aa).

Chitin-binding type-1 domains follow at residues 1–20 (APEC…QVVT) and 22–45 (DFDD…NTDA).

Glycosylated.

Functionally, N-acetyl-D-glucosamine binding lectin. Shows low hemagglutinating activity towards human erythrocytes. Has low mitogenic activity towards human peripheral blood lymphocytes. The chain is Lectin-A from Phytolacca americana (American pokeweed).